An 87-amino-acid chain; its full sequence is Putative septation protein SpoVG (87 aa).

It belongs to the SpoVG family.

Could be involved in septation. The sequence is that of Putative septation protein SpoVG from Agathobacter rectalis (strain ATCC 33656 / DSM 3377 / JCM 17463 / KCTC 5835 / VPI 0990) (Eubacterium rectale).